Here is a 170-residue protein sequence, read N- to C-terminus: tRNA-splicing endonuclease (170 aa).

Residues Tyr-110, His-116, and Lys-147 contribute to the active site.

It belongs to the tRNA-intron endonuclease family. Archaeal short subfamily. In terms of assembly, homotetramer; although the tetramer contains four active sites, only two participate in the cleavage. Therefore, it should be considered as a dimer of dimers.

The catalysed reaction is pretRNA = a 3'-half-tRNA molecule with a 5'-OH end + a 5'-half-tRNA molecule with a 2',3'-cyclic phosphate end + an intron with a 2',3'-cyclic phosphate and a 5'-hydroxyl terminus.. Endonuclease that removes tRNA introns. Cleaves pre-tRNA at the 5'- and 3'-splice sites to release the intron. The products are an intron and two tRNA half-molecules bearing 2',3' cyclic phosphate and 5'-OH termini. Recognizes a pseudosymmetric substrate in which 2 bulged loops of 3 bases are separated by a stem of 4 bp. This Pyrococcus furiosus (strain ATCC 43587 / DSM 3638 / JCM 8422 / Vc1) protein is tRNA-splicing endonuclease.